A 156-amino-acid polypeptide reads, in one-letter code: ATP synthase subunit b (156 aa).

A helical transmembrane segment spans residues 7-27; that stretch reads LIGQTVAFIIFVWFCMKFVWP.

This sequence belongs to the ATPase B chain family. In terms of assembly, F-type ATPases have 2 components, F(1) - the catalytic core - and F(0) - the membrane proton channel. F(1) has five subunits: alpha(3), beta(3), gamma(1), delta(1), epsilon(1). F(0) has three main subunits: a(1), b(2) and c(10-14). The alpha and beta chains form an alternating ring which encloses part of the gamma chain. F(1) is attached to F(0) by a central stalk formed by the gamma and epsilon chains, while a peripheral stalk is formed by the delta and b chains.

It localises to the cell inner membrane. In terms of biological role, f(1)F(0) ATP synthase produces ATP from ADP in the presence of a proton or sodium gradient. F-type ATPases consist of two structural domains, F(1) containing the extramembraneous catalytic core and F(0) containing the membrane proton channel, linked together by a central stalk and a peripheral stalk. During catalysis, ATP synthesis in the catalytic domain of F(1) is coupled via a rotary mechanism of the central stalk subunits to proton translocation. Functionally, component of the F(0) channel, it forms part of the peripheral stalk, linking F(1) to F(0). The sequence is that of ATP synthase subunit b from Shewanella baltica (strain OS155 / ATCC BAA-1091).